The primary structure comprises 203 residues: Histidine biosynthesis bifunctional protein HisIE (203 aa).

A phosphoribosyl-AMP cyclohydrolase region spans residues 1 to 114 (MLTEQQRREL…FGDASHQWLF (114 aa)). The segment at 115–203 (LYQLEQLLAE…VIDNLRKRHQ (89 aa)) is phosphoribosyl-ATP pyrophosphohydrolase.

The protein in the N-terminal section; belongs to the PRA-CH family. In the C-terminal section; belongs to the PRA-PH family.

The protein resides in the cytoplasm. It carries out the reaction 1-(5-phospho-beta-D-ribosyl)-ATP + H2O = 1-(5-phospho-beta-D-ribosyl)-5'-AMP + diphosphate + H(+). The enzyme catalyses 1-(5-phospho-beta-D-ribosyl)-5'-AMP + H2O = 1-(5-phospho-beta-D-ribosyl)-5-[(5-phospho-beta-D-ribosylamino)methylideneamino]imidazole-4-carboxamide. The protein operates within amino-acid biosynthesis; L-histidine biosynthesis; L-histidine from 5-phospho-alpha-D-ribose 1-diphosphate: step 2/9. Its pathway is amino-acid biosynthesis; L-histidine biosynthesis; L-histidine from 5-phospho-alpha-D-ribose 1-diphosphate: step 3/9. The sequence is that of Histidine biosynthesis bifunctional protein HisIE (hisI) from Salmonella typhimurium (strain LT2 / SGSC1412 / ATCC 700720).